The following is a 607-amino-acid chain: ATP-dependent rRNA helicase SPB4 (607 aa).

The Q motif motif lies at 7–35 (WDDLEYPIQPWIRSAVDVMGFENMTPVQA). The Helicase ATP-binding domain occupies 38–224 (IPLFARNKDV…KTGLRNPVKV (187 aa)). An ATP-binding site is contributed by 51-58 (SVTGSGKT). The DEAD box signature appears at 172-175 (DEAD). One can recognise a Helicase C-terminal domain in the interval 248 to 404 (KLEQVISIIN…EISLDIVNLP (157 aa)). The segment at 527 to 607 (KSELKKKNMS…NGMQGSFDDL (81 aa)) is disordered. Residues 529-565 (ELKKKNMSWSNNTQSKEEKVERRTKMALKRKRIEEEL) are a coiled coil. 2 stretches are compositionally biased toward basic and acidic residues: residues 543 to 552 (SKEEKVERRT) and 560 to 570 (RIEEELSKEAD). The segment covering 587–601 (ILQNKKSKNSNNGMQ) has biased composition (polar residues).

Belongs to the DEAD box helicase family. DDX55/SPB4 subfamily. Component of pre-60S ribosomal complexes.

It localises to the nucleus. Its subcellular location is the nucleolus. The enzyme catalyses ATP + H2O = ADP + phosphate + H(+). In terms of biological role, ATP-binding RNA helicase involved in the biogenesis of 60S ribosomal subunits. Binds 90S pre-ribosomal particles and dissociates from pre-60S ribosomal particles after processing of 27SB pre-rRNA. Required for the normal formation of 18S rRNA through the processing of pre-rRNAs at sites A0, A1 and A2, and the normal formation of 25S and 5.8S rRNAs through the processing of pre-rRNAs at sites C1 and C2. The chain is ATP-dependent rRNA helicase SPB4 from Vanderwaltozyma polyspora (strain ATCC 22028 / DSM 70294 / BCRC 21397 / CBS 2163 / NBRC 10782 / NRRL Y-8283 / UCD 57-17) (Kluyveromyces polysporus).